Here is a 177-residue protein sequence, read N- to C-terminus: MFQKFISKHNAPINSTQLAATKTPAVAAPVLSVPNLSRSTILINATTTAVTTHSGLCHVVRIDETNPTNHHALSIAGSLSNVPADMIAFAIRFEVADGVVPTAVPALYDVYPIETFNNGKAISFKDAVTIDSHPRTVGNDVYAGIMLWSNAWTASTISGVLSVNQVNREATVLQPLK.

Belongs to the microvirus G protein family. In terms of assembly, the virion is composed of 60 copies each of the F, G, and J proteins, and 12 copies of the H protein. There are 12 spikes which are each composed of 5 G and one H proteins.

It is found in the virion. In terms of biological role, attaches the circulating virion to the bacterial lipopolysaccharides which serve as receptor for the virus. Determines the phage host-range. Probably triggers with protein H the injection of the phage DNA into the host cytoplasm upon conformational changes induced by the interaction with host lipopolysaccharides. In Escherichia phage G4 (Bacteriophage G4), this protein is Major spike protein G (G).